Consider the following 435-residue polypeptide: Eukaryotic translation initiation factor 3 subunit E (435 aa).

The PCI domain occupies 219–392 (FFNHPKGRDL…GHVVMGTQPL (174 aa)).

The protein belongs to the eIF-3 subunit E family. In terms of assembly, component of the eukaryotic translation initiation factor 3 (eIF-3) complex. The eIF-3 complex interacts with pix. Interacts with mxt.

Its subcellular location is the cytoplasm. In terms of biological role, component of the eukaryotic translation initiation factor 3 (eIF-3) complex, which is involved in protein synthesis of a specialized repertoire of mRNAs and, together with other initiation factors, stimulates binding of mRNA and methionyl-tRNAi to the 40S ribosome. The eIF-3 complex specifically targets and initiates translation of a subset of mRNAs involved in cell proliferation. The protein is Eukaryotic translation initiation factor 3 subunit E (eIF3-S6) of Drosophila erecta (Fruit fly).